Consider the following 1274-residue polypeptide: MPEPGKRPVSAFTKKPRSVEVTAGSAAVFEAETERSGLKVQWQRDGSDIAANDKYGLAAEGKRHTLTVRDVGPDDQGSYAVIAGSSKVKFDLKVTEPAPPEKAESAVAPTSMEAPETPKEVPALATQLEGNVSSPEGSVSVTQDGSVAGSQGAPDDPIGLFLMRPQDGEVTVGGSIVFSARVAGASLLKPPVVKWFKGKWVDLSSKVGQHLQLHDSYDRASKVYLFELHITDAQATSAGGYRCEVSTKDKFDSCNFNLTVHEAIGSGDLDLRSAFRRTSLAGTGRRTSDSHEDAGTLDFSSLLKKSSFRRDSKLEAPAEEDVWEILRQAPPSEYERIAFQHGVTDLRGMLKRLKGMKHDEKKSTAFQKKLEPAYQVNKGHKIRLTVELADPDAEVKWLKNGQEIQMSGRYIFESIGAKRTLTISQCSLADDAAYQCVVGGEKCSTELFVKEPPVLITRSLEDQLVMVGQRVEFECEVSEEGAQVKWLKDGVELTREETFKYRFKKDGRKHHLIINEATLEDAGHYAVRTSGGQALAELIVQEKKLEVYQSIADLAVGAKDQAVFKCEVSDENVRGVWLKNGKELVPDNRIKVSHIGRVHKLTIDDVTPADEADYSFVPEGFACNLSAKLHFMEVKIDFVPRQEPPKIHLDCPGSTPDTIVVVAGNKLRLDVPISGDPAPTVIWQKTITQGKKASAGPPPGAPEDAGADEEWVFDKKLLCETEGRVRVETTKDRSVFTVEGAEKEDEGVYTVTVKNPVGEDQVNLTVKVIDVPDAPAAPKISNVGEDSCIVQWEPPAYDGGQPVLGYILERKKKKSYRWMRLNFDLLRELSHEARRMIEGVAYEMRVYAVNAVGMSRPSPASQPFMPIGPPGEPTHLTVEDVSDTTVSLKWRPPERVGAGGLDGYSVEYCQEGCSEWVTALQGLTERTSLLVKDLPTGARLLFRVRAHNVAGPGGPIITKEPVTVQEILQRPRLQLPRHLRQTIQKKVGEPVNLLIPFQGKPRPQVTWTKEGQPLAGEEVSIRNSPTDTILFIRAAHRTHSGTYQVTVRIENMEDKATLVLQIVDKPSPPLDIRVVETWGFSVALEWKPPQDDGNTEIWGYTVQKADKKTMEWFTVLEHYRQTHCVVSELIIGNGYYFRVFSHNMVGSSDRAAATKEPIFIPRPGITYEPPKYKALDFSEAPSFTQPLTNRSIIAGYNAILCCAVRGSPKPKISWFKNGLDLGEDARFRMFCKQGVLTLEIRKPCPYDGGVYVCRATNLQGEAQCECRLEVRVPQ.

Met1 is subject to N-acetylmethionine. One can recognise an Ig-like C2-type 1 domain in the interval 8 to 95 (PVSAFTKKPR…SKVKFDLKVT (88 aa)). Residue Ser47 is modified to Phosphoserine. Residues 95-104 (TEPAPPEKAE) show a composition bias toward basic and acidic residues. The tract at residues 95–153 (TEPAPPEKAESAVAPTSMEAPETPKEVPALATQLEGNVSSPEGSVSVTQDGSVAGSQGA) is disordered. Thr117 is subject to Phosphothreonine. Residues 128-149 (LEGNVSSPEGSVSVTQDGSVAG) show a composition bias toward polar residues. The Ig-like C2-type 2 domain occupies 157–259 (PIGLFLMRPQ…KFDSCNFNLT (103 aa)). The Zn(2+) site is built by Gln212, His214, Glu227, and His229. Ser279 carries the phosphoserine modification. Phosphothreonine; by PKA and PKC is present on Thr287. Ser288 carries the post-translational modification Phosphoserine. A Phosphoserine; by PKA modification is found at Ser307. Phosphoserine occurs at positions 312 and 427. Ig-like C2-type domains are found at residues 361-452 (KKST…VKEP) and 452-546 (PPVL…KKLE). Cysteines 436 and 443 form a disulfide. A phosphoserine mark is found at Ser459 and Ser550. The residue at position 607 (Thr607) is a Phosphothreonine. The 121-residue stretch at 645-765 (PKIHLDCPGS…PVGEDQVNLT (121 aa)) folds into the Ig-like C2-type 5 domain. 2 consecutive Fibronectin type-III domains span residues 774 to 870 (APAA…IGPP) and 872 to 967 (EPTH…VQEI). Residues 971–1059 (PRLQLPRHLR…ENMEDKATLV (89 aa)) form the Ig-like C2-type 6 domain. Positions 1068–1163 (PPLDIRVVET…TKEPIFIPRP (96 aa)) constitute a Fibronectin type-III 3 domain. One can recognise an Ig-like C2-type 7 domain in the interval 1181–1269 (PSFTQPLTNR…GEAQCECRLE (89 aa)). Arg1241 bears the Omega-N-methylarginine mark.

It belongs to the immunoglobulin superfamily. MyBP family. Substrate for phosphorylation by PKA and PKC. Reversible phosphorylation appears to modulate contraction. Post-translationally, polyubiquitinated.

In terms of biological role, thick filament-associated protein located in the crossbridge region of vertebrate striated muscle a bands. In vitro it binds MHC, F-actin and native thin filaments, and modifies the activity of actin-activated myosin ATPase. It may modulate muscle contraction or may play a more structural role. In Rattus norvegicus (Rat), this protein is Myosin-binding protein C, cardiac-type (Mybpc3).